Reading from the N-terminus, the 287-residue chain is Undecaprenyl-diphosphatase (287 aa).

Helical transmembrane passes span 50–70 (PGVS…IAYF), 99–119 (IAMA…KLFW), 128–148 (LRSV…LAVA), 206–226 (FLLG…DALA), 231–251 (AGPL…WLAI), and 263–283 (TWLF…WWSI).

It belongs to the UppP family.

The protein resides in the cell inner membrane. It catalyses the reaction di-trans,octa-cis-undecaprenyl diphosphate + H2O = di-trans,octa-cis-undecaprenyl phosphate + phosphate + H(+). Its function is as follows. Catalyzes the dephosphorylation of undecaprenyl diphosphate (UPP). Confers resistance to bacitracin. This is Undecaprenyl-diphosphatase from Parasynechococcus marenigrum (strain WH8102).